The following is a 143-amino-acid chain: Ribosome maturation factor RimP (143 aa).

The protein belongs to the RimP family.

The protein localises to the cytoplasm. Required for maturation of 30S ribosomal subunits. The sequence is that of Ribosome maturation factor RimP from Borrelia turicatae (strain 91E135).